A 445-amino-acid chain; its full sequence is Tubulin beta chain (445 aa).

Residues Gln-11, Glu-69, Ser-138, Gly-142, Thr-143, Gly-144, Asn-204, and Asn-226 each contribute to the GTP site. Glu-69 provides a ligand contact to Mg(2+). Residues 426 to 445 (QDATAEEEGEFEEEEGDVEA) form a disordered region. The span at 429–445 (TAEEEGEFEEEEGDVEA) shows a compositional bias: acidic residues.

It belongs to the tubulin family. As to quaternary structure, dimer of alpha and beta chains. A typical microtubule is a hollow water-filled tube with an outer diameter of 25 nm and an inner diameter of 15 nM. Alpha-beta heterodimers associate head-to-tail to form protofilaments running lengthwise along the microtubule wall with the beta-tubulin subunit facing the microtubule plus end conferring a structural polarity. Microtubules usually have 13 protofilaments but different protofilament numbers can be found in some organisms and specialized cells. Interacts with DCX/apicortin; the interaction stabilizes microtubule assembly. It depends on Mg(2+) as a cofactor.

Its subcellular location is the cytoplasm. It localises to the cytoskeleton. Tubulin is the major constituent of microtubules, a cylinder consisting of laterally associated linear protofilaments composed of alpha- and beta-tubulin heterodimers. Microtubules grow by the addition of GTP-tubulin dimers to the microtubule end, where a stabilizing cap forms. Below the cap, tubulin dimers are in GDP-bound state, owing to GTPase activity of alpha-tubulin. This is Tubulin beta chain from Plasmodium falciparum.